Consider the following 144-residue polypeptide: Large ribosomal subunit protein uL15 (144 aa).

Positions 1-57 (MKLNDLSPAPGSRREKHRPGRGIGSGLGKTGGRGHKGQSSRSGGTIAPGFEGGQQPL) are disordered. Gly residues predominate over residues 21-31 (RGIGSGLGKTG).

This sequence belongs to the universal ribosomal protein uL15 family. As to quaternary structure, part of the 50S ribosomal subunit.

Functionally, binds to the 23S rRNA. The protein is Large ribosomal subunit protein uL15 of Pseudomonas savastanoi pv. phaseolicola (strain 1448A / Race 6) (Pseudomonas syringae pv. phaseolicola (strain 1448A / Race 6)).